Reading from the N-terminus, the 362-residue chain is Phosphoserine aminotransferase (362 aa).

R43 is a binding site for L-glutamate. Residues 77–78 (AR), W103, T153, D173, and Q196 contribute to the pyridoxal 5'-phosphate site. K197 carries the post-translational modification N6-(pyridoxal phosphate)lysine.

Belongs to the class-V pyridoxal-phosphate-dependent aminotransferase family. SerC subfamily. As to quaternary structure, homodimer. Requires pyridoxal 5'-phosphate as cofactor.

The protein resides in the cytoplasm. The enzyme catalyses O-phospho-L-serine + 2-oxoglutarate = 3-phosphooxypyruvate + L-glutamate. The catalysed reaction is 4-(phosphooxy)-L-threonine + 2-oxoglutarate = (R)-3-hydroxy-2-oxo-4-phosphooxybutanoate + L-glutamate. It functions in the pathway amino-acid biosynthesis; L-serine biosynthesis; L-serine from 3-phospho-D-glycerate: step 2/3. The protein operates within cofactor biosynthesis; pyridoxine 5'-phosphate biosynthesis; pyridoxine 5'-phosphate from D-erythrose 4-phosphate: step 3/5. Functionally, catalyzes the reversible conversion of 3-phosphohydroxypyruvate to phosphoserine and of 3-hydroxy-2-oxo-4-phosphonooxybutanoate to phosphohydroxythreonine. This is Phosphoserine aminotransferase from Legionella pneumophila (strain Paris).